Here is a 333-residue protein sequence, read N- to C-terminus: Putative pectinesterase 14 (333 aa).

The first 16 residues, 1-16, serve as a signal peptide directing secretion; sequence MLFFILFLSIISPIES. N-linked (GlcNAc...) asparagine glycans are attached at residues Asn-108 and Asn-114. Position 116 (Thr-116) interacts with substrate. Asn-133 carries N-linked (GlcNAc...) asparagine glycosylation. Gln-151 contributes to the substrate binding site. Asp-174 functions as the Proton donor in the catalytic mechanism. The active-site Nucleophile is Asp-195. Arg-253 provides a ligand contact to substrate. Asn-302 and Asn-323 each carry an N-linked (GlcNAc...) asparagine glycan.

This sequence belongs to the pectinesterase family. Expressed in flower buds.

The protein localises to the secreted. It localises to the cell wall. The enzyme catalyses [(1-&gt;4)-alpha-D-galacturonosyl methyl ester](n) + n H2O = [(1-&gt;4)-alpha-D-galacturonosyl](n) + n methanol + n H(+). The protein operates within glycan metabolism; pectin degradation; 2-dehydro-3-deoxy-D-gluconate from pectin: step 1/5. Acts in the modification of cell walls via demethylesterification of cell wall pectin. The chain is Putative pectinesterase 14 (PME14) from Arabidopsis thaliana (Mouse-ear cress).